We begin with the raw amino-acid sequence, 277 residues long: Adenylate kinase (277 aa).

53 to 58 (GAGKGT) lines the ATP pocket. Residues 73 to 102 (ATGDMLRAQVAAKTPLGREAKKIMDAGGLV) are NMP. AMP is bound by residues Thr74, Arg79, 100 to 102 (GLV), 129 to 132 (GFPR), and Gln136. The segment at 170-207 (GRLVHPASGRSYHKIFNPPKAPMTDDATGEPLIQRSDD) is LID. Residues Arg171 and 180 to 181 (SY) contribute to the ATP site. 2 residues coordinate AMP: Arg204 and Arg215. Gln243 provides a ligand contact to ATP.

The protein belongs to the adenylate kinase family. AK2 subfamily. Monomer.

It is found in the cytoplasm. Its subcellular location is the cytosol. The protein resides in the mitochondrion intermembrane space. It carries out the reaction AMP + ATP = 2 ADP. Functionally, catalyzes the reversible transfer of the terminal phosphate group between ATP and AMP. Plays an important role in cellular energy homeostasis and in adenine nucleotide metabolism. Adenylate kinase activity is critical for regulation of the phosphate utilization and the AMP de novo biosynthesis pathways. This chain is Adenylate kinase, found in Phaeosphaeria nodorum (strain SN15 / ATCC MYA-4574 / FGSC 10173) (Glume blotch fungus).